Reading from the N-terminus, the 315-residue chain is Mannose-6-phosphate isomerase ManA (315 aa).

Zn(2+)-binding residues include His97, Glu115, and His172. Arg192 is a catalytic residue.

It belongs to the mannose-6-phosphate isomerase type 1 family. It depends on Zn(2+) as a cofactor.

It carries out the reaction D-mannose 6-phosphate = D-fructose 6-phosphate. The polypeptide is Mannose-6-phosphate isomerase ManA (manA) (Bacillus subtilis (strain 168)).